The following is a 292-amino-acid chain: Large ribosomal subunit protein bL19m (292 aa).

The segment at 41-60 is disordered; sequence SRFQSTGPSEPGGFKPPPKP. The residue at position 77 (S77) is a Phosphoserine.

Belongs to the bacterial ribosomal protein bL19 family. In terms of assembly, component of the mitochondrial ribosome large subunit (39S) which comprises a 16S rRNA and about 50 distinct proteins.

The protein localises to the mitochondrion. This Mus musculus (Mouse) protein is Large ribosomal subunit protein bL19m (Mrpl19).